The chain runs to 423 residues: Serine--tRNA ligase (423 aa).

An L-serine-binding site is contributed by 231 to 233; sequence TGE. 262-264 serves as a coordination point for ATP; the sequence is RSE. E285 contributes to the L-serine binding site. Residue 349-352 participates in ATP binding; sequence EISS. S385 provides a ligand contact to L-serine.

It belongs to the class-II aminoacyl-tRNA synthetase family. Type-1 seryl-tRNA synthetase subfamily. As to quaternary structure, homodimer. The tRNA molecule binds across the dimer.

The protein resides in the cytoplasm. The catalysed reaction is tRNA(Ser) + L-serine + ATP = L-seryl-tRNA(Ser) + AMP + diphosphate + H(+). It catalyses the reaction tRNA(Sec) + L-serine + ATP = L-seryl-tRNA(Sec) + AMP + diphosphate + H(+). It participates in aminoacyl-tRNA biosynthesis; selenocysteinyl-tRNA(Sec) biosynthesis; L-seryl-tRNA(Sec) from L-serine and tRNA(Sec): step 1/1. Functionally, catalyzes the attachment of serine to tRNA(Ser). Is also able to aminoacylate tRNA(Sec) with serine, to form the misacylated tRNA L-seryl-tRNA(Sec), which will be further converted into selenocysteinyl-tRNA(Sec). The protein is Serine--tRNA ligase of Coxiella burnetii (strain RSA 331 / Henzerling II).